Here is a 1911-residue protein sequence, read N- to C-terminus: Protein TIC 214 (1911 aa).

6 helical membrane passes run 41–61, 81–103, 108–128, 147–167, 195–215, and 238–258; these read IINS…FSIG, ISAT…YAPL, GKPH…FFWN, FNIQ…HFIL, IGWL…LFWI, and IFSI…PLPI. Disordered regions lie at residues 265–299, 798–817, and 1599–1647; these read ETSE…STEE, DSEE…KEEN, and NQNQ…RKKK. Positions 268–297 are enriched in acidic residues; sequence ETEESEENEEESDIEITSEPKEQDEEEGST. Basic and acidic residues-rich tracts occupy residues 1603–1615 and 1623–1635; these read QEKK…RDLG and QKQK…EKNY.

The protein belongs to the TIC214 family. As to quaternary structure, part of the Tic complex.

It is found in the plastid. Its subcellular location is the chloroplast inner membrane. Involved in protein precursor import into chloroplasts. May be part of an intermediate translocation complex acting as a protein-conducting channel at the inner envelope. This chain is Protein TIC 214, found in Lemna minor (Common duckweed).